Here is a 152-residue protein sequence, read N- to C-terminus: Xanthine-guanine phosphoribosyltransferase (152 aa).

5-phospho-alpha-D-ribose 1-diphosphate contacts are provided by residues 37–38 (RG) and 88–96 (DDLVDTGGT). Asp-89 contributes to the Mg(2+) binding site. Residues Asp-92 and Ile-135 each contribute to the guanine site. The xanthine site is built by Asp-92 and Ile-135. GMP contacts are provided by residues 92–96 (DTGGT) and 134–135 (WI).

This sequence belongs to the purine/pyrimidine phosphoribosyltransferase family. XGPT subfamily. Homotetramer. It depends on Mg(2+) as a cofactor.

It is found in the cell inner membrane. The catalysed reaction is GMP + diphosphate = guanine + 5-phospho-alpha-D-ribose 1-diphosphate. It catalyses the reaction XMP + diphosphate = xanthine + 5-phospho-alpha-D-ribose 1-diphosphate. The enzyme catalyses IMP + diphosphate = hypoxanthine + 5-phospho-alpha-D-ribose 1-diphosphate. Its pathway is purine metabolism; GMP biosynthesis via salvage pathway; GMP from guanine: step 1/1. It functions in the pathway purine metabolism; XMP biosynthesis via salvage pathway; XMP from xanthine: step 1/1. Purine salvage pathway enzyme that catalyzes the transfer of the ribosyl-5-phosphate group from 5-phospho-alpha-D-ribose 1-diphosphate (PRPP) to the N9 position of the 6-oxopurines guanine and xanthine to form the corresponding ribonucleotides GMP (guanosine 5'-monophosphate) and XMP (xanthosine 5'-monophosphate), with the release of PPi. To a lesser extent, also acts on hypoxanthine. In Yersinia enterocolitica serotype O:8 / biotype 1B (strain NCTC 13174 / 8081), this protein is Xanthine-guanine phosphoribosyltransferase.